Reading from the N-terminus, the 203-residue chain is Large ribosomal subunit protein bL25 (203 aa).

This sequence belongs to the bacterial ribosomal protein bL25 family. CTC subfamily. In terms of assembly, part of the 50S ribosomal subunit; part of the 5S rRNA/L5/L18/L25 subcomplex. Contacts the 5S rRNA. Binds to the 5S rRNA independently of L5 and L18.

This is one of the proteins that binds to the 5S RNA in the ribosome where it forms part of the central protuberance. The chain is Large ribosomal subunit protein bL25 from Chlorobium phaeovibrioides (strain DSM 265 / 1930) (Prosthecochloris vibrioformis (strain DSM 265)).